The sequence spans 335 residues: MGQSFSRWLERQWYGHTGWQLILRPFSWLFYILIALRRLAYRLRLFKSLKLSVPVIIVGNINVGGTGKTPFVIWLVQQLRQNGWYPGIISRGYGGKSIHTHQVTKDSLPQEVGDEPVLLVQRTGLPLYVGRKRTRAARHLLRDYPECNLIISDDGLQHYALERDMEIVIIDGERIFGNGQLLPAGPLREPSSRLEDVDAVVFNGGPPAAGGYLMQLIPEDLRKVSAPQERMALNELIGQHVHAVAGIGNPQRFFGQLEQLGLVVEAHPFPDHHAYTEDDFEFAKDDIVLMTEKDAVKCIAFARENWWFMPISAEIDRALAEKILARLTRLMEKEI.

An ATP-binding site is contributed by 62–69; it reads NVGGTGKT.

Belongs to the LpxK family.

It carries out the reaction a lipid A disaccharide + ATP = a lipid IVA + ADP + H(+). The protein operates within glycolipid biosynthesis; lipid IV(A) biosynthesis; lipid IV(A) from (3R)-3-hydroxytetradecanoyl-[acyl-carrier-protein] and UDP-N-acetyl-alpha-D-glucosamine: step 6/6. Transfers the gamma-phosphate of ATP to the 4'-position of a tetraacyldisaccharide 1-phosphate intermediate (termed DS-1-P) to form tetraacyldisaccharide 1,4'-bis-phosphate (lipid IVA). The chain is Tetraacyldisaccharide 4'-kinase from Methylobacillus flagellatus (strain ATCC 51484 / DSM 6875 / VKM B-1610 / KT).